The primary structure comprises 443 residues: MAARKCGAPPIAADGSTRRPDCVTAVRTQARAPTQHYAESVARRQRVLTITAWLAVVVTGSFALMQLATGAGGWYIALINVFTAVTFAIVPLLHRFGGLVAPLTFIGTAYVAIFAIGWDVGTDAGAQFFFLVAAALVVLLVGIEHTALAVGLAAVAAGLVIALEFLVPPDTGLQPPWAMSVSFVLTTVSACGVAVATVWFALRDTARAEAVMEAEHDRSEALLANMLPASIAERLKEPERNIIADKYDEASVLFADIVGFTERASSTAPADLVRFLDRLYSAFDELVDQHGLEKIKVSGDSYMVVSGVPRPRPDHTQALADFALDMTNVAAQLKDPRGNPVPLRVGLATGPVVAGVVGSRRFFYDVWGDAVNVASRMESTDSVGQIQVPDEVYERLKDDFVLRERGHINVKGKGVMRTWYLIGRKVAADPGEVRGAEPRTAGV.

6 helical membrane passes run 47–69 (VLTITAWLAVVVTGSFALMQLAT), 74–93 (WYIALINVFTAVTFAIVPLL), 98–120 (GLVAPLTFIGTAYVAIFAIGWDV), 124–143 (AGAQFFFLVAAALVVLLVGI), 148–167 (LAVGLAAVAAGLVIALEFLV), and 180–202 (SVSFVLTTVSACGVAVATVWFAL). At 203-443 (RDTARAEAVM…RGAEPRTAGV (241 aa)) the chain is on the cytoplasmic side. The region spanning 251 to 378 (SVLFADIVGF…DAVNVASRME (128 aa)) is the Guanylate cyclase domain. The Mg(2+) site is built by aspartate 256 and aspartate 300.

This sequence belongs to the adenylyl cyclase class-4/guanylyl cyclase family. In terms of assembly, homodimer. Can also exist as monomer. Requires Mg(2+) as cofactor. The cofactor is Mn(2+).

It localises to the cell membrane. The enzyme catalyses ATP = 3',5'-cyclic AMP + diphosphate. This is Adenylate cyclase (cya) from Mycobacterium bovis (strain ATCC BAA-935 / AF2122/97).